The following is a 1238-amino-acid chain: Virulence sensor protein BvgS (1238 aa).

A signal peptide spans 1–30; it reads MPAPHRLYPRSLICLAQALLAWALLAWAPA. Topologically, residues 33 to 307 are cytoplasmic; sequence SQELTLVGKA…REQQWMANHP (275 aa). The helical transmembrane segment at 308-331 threads the bilayer; sequence VVKVAVLNLFAPFTLFRTDEQFGG. Over 332-541 the chain is Periplasmic; the sequence is ISAAVLQLLQ…PRTWYAYRNE (210 aa). Residues 542–563 traverse the membrane as a helical segment; the sequence is IYLLIGLGLLSALLFLSWIVYL. Residues 564–1238 are Cytoplasmic-facing; sequence RRQIRQRKRA…LEQRPHQGQP (675 aa). Positions 580 to 651 constitute a PAS domain; that stretch reads QLEFMRVLID…MHEFLLTRMS (72 aa). Residues 652–708 form the PAC domain; it reads AEREPRFEDRDVTLHGRTRHVYQWTVPYGDSLGELKGIIGGWIDITERAELLRELHD. Residues 726–948 enclose the Histidine kinase domain; the sequence is TMSHEIRTPM…TVSVDLRLTM (223 aa). Histidine 729 bears the Phosphohistidine; by autocatalysis mark. A Response regulatory domain is found at 974–1095; the sequence is RVLVVDDHKP…ALRQRLNEAA (122 aa). The residue at position 1023 (aspartate 1023) is a 4-aspartylphosphate. Residues 1133–1228 enclose the HPt domain; that stretch reads DEALIRQLLE…AALETQLRAW (96 aa). Histidine 1172 is subject to Phosphohistidine.

Activation requires a sequential transfer of a phosphate group from a His in the primary transmitter domain, to an Asp in the receiver domain and to a His in the secondary transmitter domain.

The protein localises to the cell inner membrane. The catalysed reaction is ATP + protein L-histidine = ADP + protein N-phospho-L-histidine.. In terms of biological role, member of the two-component regulatory system BvgS/BvgA. Phosphorylates BvgA via a four-step phosphorelay in response to environmental signals. The chain is Virulence sensor protein BvgS (bvgS) from Bordetella bronchiseptica (strain ATCC BAA-588 / NCTC 13252 / RB50) (Alcaligenes bronchisepticus).